Reading from the N-terminus, the 164-residue chain is Cell division protein SepF (164 aa).

The interval 21-71 is disordered; that stretch reads YQQGQQPAQQQQSPVQAVPTPVPAPQQQAKRAPVTPLHKPSTTTRNAAPAE. The segment covering 22-49 has biased composition (low complexity); it reads QQGQQPAQQQQSPVQAVPTPVPAPQQQA.

This sequence belongs to the SepF family. In terms of assembly, homodimer. Interacts with FtsZ.

The protein resides in the cytoplasm. Cell division protein that is part of the divisome complex and is recruited early to the Z-ring. Probably stimulates Z-ring formation, perhaps through the cross-linking of FtsZ protofilaments. Its function overlaps with FtsA. The chain is Cell division protein SepF from Clavibacter sepedonicus (Clavibacter michiganensis subsp. sepedonicus).